The sequence spans 377 residues: Erythronate-4-phosphate dehydrogenase (377 aa).

Positions 45 and 67 each coordinate substrate. NAD(+) is bound by residues glutamine 127 to valine 128, aspartate 147, and threonine 176. Arginine 209 is a catalytic residue. NAD(+) is bound at residue aspartate 233. The active site involves glutamate 238. Catalysis depends on histidine 255, which acts as the Proton donor. Glycine 258 contacts NAD(+). Substrate is bound at residue tyrosine 259.

This sequence belongs to the D-isomer specific 2-hydroxyacid dehydrogenase family. PdxB subfamily. Homodimer.

It is found in the cytoplasm. The enzyme catalyses 4-phospho-D-erythronate + NAD(+) = (R)-3-hydroxy-2-oxo-4-phosphooxybutanoate + NADH + H(+). Its pathway is cofactor biosynthesis; pyridoxine 5'-phosphate biosynthesis; pyridoxine 5'-phosphate from D-erythrose 4-phosphate: step 2/5. In terms of biological role, catalyzes the oxidation of erythronate-4-phosphate to 3-hydroxy-2-oxo-4-phosphonooxybutanoate. In Vibrio vulnificus (strain CMCP6), this protein is Erythronate-4-phosphate dehydrogenase.